A 493-amino-acid chain; its full sequence is Argininosuccinate lyase (493 aa).

It belongs to the lyase 1 family. Argininosuccinate lyase subfamily.

It is found in the cytoplasm. The catalysed reaction is 2-(N(omega)-L-arginino)succinate = fumarate + L-arginine. The protein operates within amino-acid biosynthesis; L-arginine biosynthesis; L-arginine from L-ornithine and carbamoyl phosphate: step 3/3. The sequence is that of Argininosuccinate lyase from Clavibacter sepedonicus (Clavibacter michiganensis subsp. sepedonicus).